Consider the following 191-residue polypeptide: 3-isopropylmalate dehydratase small subunit (191 aa).

Belongs to the LeuD family. LeuD type 1 subfamily. As to quaternary structure, heterodimer of LeuC and LeuD.

It carries out the reaction (2R,3S)-3-isopropylmalate = (2S)-2-isopropylmalate. It functions in the pathway amino-acid biosynthesis; L-leucine biosynthesis; L-leucine from 3-methyl-2-oxobutanoate: step 2/4. Functionally, catalyzes the isomerization between 2-isopropylmalate and 3-isopropylmalate, via the formation of 2-isopropylmaleate. The polypeptide is 3-isopropylmalate dehydratase small subunit (Staphylococcus saprophyticus subsp. saprophyticus (strain ATCC 15305 / DSM 20229 / NCIMB 8711 / NCTC 7292 / S-41)).